A 170-amino-acid chain; its full sequence is MSQAGTGVCGNGGQEDSAAAGPFSFSPEPTLEDIRRLHAEFAAERDWEQFHQPRNLLLALVGEVGELAELFQWKSDAEPGPQAWQPKERAALQEELSDVLIYLVALAARCHVDLPRAVISKMDTNRQRYPVHLSRGSACKYTDLPRGTLSENEAVGSGDPASELGNQAST.

Positions Met-1 to Phe-25 are disordered. The residue at position 2 (Ser-2) is an N-acetylserine. Ser-2 is subject to Phosphoserine. Substrate contacts are provided by residues His-38 and Trp-47–His-51. The Mg(2+) site is built by Glu-63 and Glu-66. Trp-73 contributes to the substrate binding site. The Mg(2+) site is built by Glu-95 and Asp-98. Tyr-102 is a binding site for substrate. The interval Leu-149–Thr-170 is disordered.

In terms of assembly, homotetramer. Mg(2+) is required as a cofactor.

The protein resides in the cytoplasm. The protein localises to the cytosol. It carries out the reaction dCTP + H2O = dCMP + diphosphate + H(+). Functionally, hydrolyzes deoxynucleoside triphosphates (dNTPs) to the corresponding nucleoside monophosphates. Has a strong preference for dCTP and its analogs including 5-iodo-dCTP and 5-methyl-dCTP for which it may even have a higher efficiency. May protect DNA or RNA against the incorporation of these genotoxic nucleotide analogs through their catabolism. In Rattus norvegicus (Rat), this protein is dCTP pyrophosphatase 1.